We begin with the raw amino-acid sequence, 377 residues long: Heat stress transcription factor B-2b (377 aa).

The segment at 1–56 is disordered; that stretch reads MPGEQTGETPTVAGVGGGGAGCSAGNSGGSSGCGAGGGGGGSGGGGGGGGDSQRSI. The segment covering 14–51 has biased composition (gly residues); the sequence is GVGGGGAGCSAGNSGGSSGCGAGGGGGGSGGGGGGGGD. The DNA-binding element occupies 57-151; that stretch reads PTPFLTKTYQ…LLRDIQRRKI (95 aa). Residues 220–265 are hydrophobic repeat HR-A/B; the sequence is TTSCTTAPELVEENERLRKDNERLRKEMTKLKGLYANIYTLMANFT. Residues 323-327 carry the Nuclear localization signal motif; sequence KRARR. A disordered region spans residues 326 to 377; the sequence is RREEELGAAEEEDDDRREAAAQEGEQSSDVKAEPMEENNSGNHNGSWLELGK. Residues 331–340 show a composition bias toward acidic residues; the sequence is LGAAEEEDDD.

Belongs to the HSF family. Class B subfamily. In terms of assembly, homotrimer. Post-translationally, exhibits temperature-dependent phosphorylation.

The protein localises to the nucleus. Its function is as follows. Transcriptional regulator that specifically binds DNA sequence 5'-AGAAnnTTCT-3' known as heat shock promoter elements (HSE). The chain is Heat stress transcription factor B-2b (HSFB2B) from Arabidopsis thaliana (Mouse-ear cress).